The sequence spans 704 residues: Arylphorin (704 aa).

The first 16 residues, 1-16 (MKIVLVLAGLIALVQS), serve as a signal peptide directing secretion. 3 N-linked (GlcNAc...) asparagine glycosylation sites follow: N73, N212, and N360.

This sequence belongs to the hemocyanin family. Homohexamer of two stacked trimers; disulfide-linked. Post-translationally, glycosylation at Asn-360 is required for proper folding.

It is found in the secreted. Its subcellular location is the extracellular space. Its function is as follows. Arylphorin is a larval storage protein (LSP) which may serve as a storage protein used primarily as a source of aromatic amino acids for protein synthesis during metamorphosis. It is a constituent of the sclerotizing system of the cuticle, and serves as a carrier for ecdysteroid hormone. This is Arylphorin from Antheraea pernyi (Chinese oak silk moth).